We begin with the raw amino-acid sequence, 267 residues long: UPF0246 protein Dshi_3333 (267 aa).

Belongs to the UPF0246 family.

The chain is UPF0246 protein Dshi_3333 from Dinoroseobacter shibae (strain DSM 16493 / NCIMB 14021 / DFL 12).